Here is a 644-residue protein sequence, read N- to C-terminus: Coiled-coil domain-containing protein 22 homolog (644 aa).

Residues 316–341 (DEQKAAAMAGLSESGPPKMDTEEELQ) are disordered. 3 coiled-coil regions span residues 333–383 (KMDT…NEQV), 409–486 (DAEN…GKDD), and 592–644 (GVIM…LKSS).

Belongs to the CCDC22 family.

This chain is Coiled-coil domain-containing protein 22 homolog, found in Nematostella vectensis (Starlet sea anemone).